A 136-amino-acid chain; its full sequence is Transcription antitermination protein NusB (136 aa).

It belongs to the NusB family.

Its function is as follows. Involved in transcription antitermination. Required for transcription of ribosomal RNA (rRNA) genes. Binds specifically to the boxA antiterminator sequence of the ribosomal RNA (rrn) operons. The chain is Transcription antitermination protein NusB from Salinispora tropica (strain ATCC BAA-916 / DSM 44818 / JCM 13857 / NBRC 105044 / CNB-440).